We begin with the raw amino-acid sequence, 520 residues long: Fusaridione A cluster transcription factor fsdR (520 aa).

The segment at 1–30 (MSTGPPSGISLVSMTTPRKSGQHTPESWSK) is disordered.

The protein resides in the nucleus. Transcription factor that regulates the expression of the gene cluster that mediates the biosynthesis of fusaridione A. This is Fusaridione A cluster transcription factor fsdR from Fusarium heterosporum.